Consider the following 167-residue polypeptide: Small ribosomal subunit protein uS5 (167 aa).

One can recognise an S5 DRBM domain in the interval 12 to 75 (LQEKLIAVNR…EKARRNMVTV (64 aa)).

It belongs to the universal ribosomal protein uS5 family. Part of the 30S ribosomal subunit. Contacts proteins S4 and S8.

With S4 and S12 plays an important role in translational accuracy. Functionally, located at the back of the 30S subunit body where it stabilizes the conformation of the head with respect to the body. This is Small ribosomal subunit protein uS5 from Shewanella denitrificans (strain OS217 / ATCC BAA-1090 / DSM 15013).